A 447-amino-acid polypeptide reads, in one-letter code: Trichothecene C-3 esterase (447 aa).

Positions 1–22 (MALNRLVFSLSLWLGFIGAAQA) are cleaved as a signal peptide. 4 N-linked (GlcNAc...) asparagine glycosylation sites follow: Asn59, Asn66, Asn136, and Asn189. Catalysis depends on Ser202, which acts as the Charge relay system. Residues Asn238, Asn284, and Asn314 are each glycosylated (N-linked (GlcNAc...) asparagine). Catalysis depends on charge relay system residues Asp352 and His384. N-linked (GlcNAc...) asparagine glycosylation is found at Asn389 and Asn423.

This sequence belongs to the AB hydrolase superfamily. Lipase family.

It functions in the pathway sesquiterpene biosynthesis; trichothecene biosynthesis. Its function is as follows. Trichothecene C-3 esterase; part of the core gene cluster that mediates the biosynthesis of trichothecenes, a very large family of chemically related bicyclic sesquiterpene compounds acting as mycotoxins, including T2-toxin. The biosynthesis of trichothecenes begins with the cyclization of farnesyl diphosphate to trichodiene and is catalyzed by the trichodiene synthase TRI5. Trichodiene undergoes a series of oxygenations catalyzed by the cytochrome P450 monooxygenase TRI4. TRI4 controls the addition of four oxygens at C-2, C-3, C-11, and the C-12, C-13-epoxide to form the intermediate isotrichotriol. Isotrichotriol then undergoes a non-enzymatic isomerization and cyclization to form isotrichodermol. During this process, the oxygen at the C-2 position becomes the pyran ring oxygen and the hydroxyl group at C-11 is lost. More complex type A trichothecenes are built by modifying isotrichodermol through a series of paired hydroxylation and acetylation or acylation steps. Isotrichodermol is converted to isotrichodermin by the acetyltransferase TRI101. TRI101 encodes a C-3 transacetylase that acts as a self-protection or resistance factor during biosynthesis and that the presence of a free C-3 hydroxyl group is a key component of Fusarium trichothecene phytotoxicity. A second hydroxyl group is added to C-15 by the trichothecene C-15 hydroxylase TRI11, producing 15-decalonectrin, which is then acetylated by TRI3, producing calonectrin. A third hydroxyl group is added at C-4 by the cytochrome P450 monooxygenase TRI13, converting calonectrin to 3,15-diacetoxyspirpenol, which is subsequently acetylated by the acetyltransferase TRI7. A fourth hydroxyl group is added to C-8 by the cytochrome P450 monooxygenase TRI1, followed by the addition of an isovaleryl moiety by TRI16. Finally, the acetyl group is removed from the C-3 position by the trichothecene C-3 esterase TRI8 to produce T-2 toxin. The polypeptide is Trichothecene C-3 esterase (Fusarium sporotrichioides).